The following is a 393-amino-acid chain: S-adenosylmethionine synthase 2 (393 aa).

Mg(2+) is bound at residue E9. An ATP-binding site is contributed by H15. E43 contributes to the K(+) binding site. 2 residues coordinate L-methionine: E56 and Q99. Residues 167-169 (DGK), 235-238 (SGRF), D246, 252-253 (RK), A269, K273, and K277 each bind ATP. D246 is a binding site for L-methionine. K277 is an L-methionine binding site.

This sequence belongs to the AdoMet synthase family. Homotetramer. The cofactor is Mn(2+). It depends on Mg(2+) as a cofactor. Co(2+) serves as cofactor. K(+) is required as a cofactor.

It localises to the cytoplasm. It catalyses the reaction L-methionine + ATP + H2O = S-adenosyl-L-methionine + phosphate + diphosphate. It functions in the pathway amino-acid biosynthesis; S-adenosyl-L-methionine biosynthesis; S-adenosyl-L-methionine from L-methionine: step 1/1. Functionally, catalyzes the formation of S-adenosylmethionine from methionine and ATP. The reaction comprises two steps that are both catalyzed by the same enzyme: formation of S-adenosylmethionine (AdoMet) and triphosphate, and subsequent hydrolysis of the triphosphate. The chain is S-adenosylmethionine synthase 2 (SAMS2) from Elaeagnus umbellata (Autumn olive).